Reading from the N-terminus, the 349-residue chain is Isopentenyl-diphosphate delta-isomerase (349 aa).

A substrate-binding site is contributed by 6–7 (RK). FMN-binding positions include 62 to 64 (AMT), S93, and N122. Substrate is bound at residue Q152. Mg(2+) is bound at residue E153. FMN contacts are provided by residues K184, T214, 258 to 259 (GG), and 280 to 281 (AG).

The protein belongs to the IPP isomerase type 2 family. Homooctamer. Dimer of tetramers. It depends on FMN as a cofactor. NADPH serves as cofactor. The cofactor is Mg(2+).

It localises to the cytoplasm. The catalysed reaction is isopentenyl diphosphate = dimethylallyl diphosphate. Involved in the biosynthesis of isoprenoids. Catalyzes the 1,3-allylic rearrangement of the homoallylic substrate isopentenyl (IPP) to its allylic isomer, dimethylallyl diphosphate (DMAPP). The chain is Isopentenyl-diphosphate delta-isomerase from Bacillus cereus (strain ZK / E33L).